A 298-amino-acid polypeptide reads, in one-letter code: GTPase Era (298 aa).

The 168-residue stretch at lysine 4 to glutamate 171 folds into the Era-type G domain. The tract at residues glycine 12–serine 19 is G1. Glycine 12–serine 19 provides a ligand contact to GTP. The interval glutamine 38–asparagine 42 is G2. The G3 stretch occupies residues aspartate 59–glycine 62. GTP contacts are provided by residues aspartate 59–valine 63 and asparagine 121–aspartate 124. Positions asparagine 121–aspartate 124 are G4. Residues isoleucine 150–alanine 152 form a G5 region. One can recognise a KH type-2 domain in the interval threonine 202 to glutamate 280.

The protein belongs to the TRAFAC class TrmE-Era-EngA-EngB-Septin-like GTPase superfamily. Era GTPase family. Monomer.

The protein resides in the cytoplasm. It localises to the cell membrane. Its function is as follows. An essential GTPase that binds both GDP and GTP, with rapid nucleotide exchange. Plays a role in 16S rRNA processing and 30S ribosomal subunit biogenesis and possibly also in cell cycle regulation and energy metabolism. This Carboxydothermus hydrogenoformans (strain ATCC BAA-161 / DSM 6008 / Z-2901) protein is GTPase Era.